The sequence spans 195 residues: dITP/XTP pyrophosphatase (195 aa).

8-13 provides a ligand contact to substrate; the sequence is SNNQGK. Positions 39 and 68 each coordinate Mg(2+). Catalysis depends on aspartate 68, which acts as the Proton acceptor. Substrate is bound by residues serine 69, 149 to 152, lysine 172, and 177 to 178; these read FGYD and HR.

The protein belongs to the HAM1 NTPase family. Homodimer. Requires Mg(2+) as cofactor.

The enzyme catalyses XTP + H2O = XMP + diphosphate + H(+). It carries out the reaction dITP + H2O = dIMP + diphosphate + H(+). It catalyses the reaction ITP + H2O = IMP + diphosphate + H(+). Its function is as follows. Pyrophosphatase that catalyzes the hydrolysis of nucleoside triphosphates to their monophosphate derivatives, with a high preference for the non-canonical purine nucleotides XTP (xanthosine triphosphate), dITP (deoxyinosine triphosphate) and ITP. Seems to function as a house-cleaning enzyme that removes non-canonical purine nucleotides from the nucleotide pool, thus preventing their incorporation into DNA/RNA and avoiding chromosomal lesions. The protein is dITP/XTP pyrophosphatase of Staphylococcus aureus (strain COL).